A 778-amino-acid chain; its full sequence is Probable potassium transporter 13 (778 aa).

The Cytoplasmic segment spans residues 1 to 28; it reads MDVEGGGGGGGGAPPRGRNSWGWQKGTL. Residues 29–49 form a helical membrane-spanning segment; sequence LLAYQSFGVVYGDLCISPVYV. At 50–72 the chain is on the extracellular side; that stretch reads YKNTFSGKLRLHEEDEEILGVLS. The helical transmembrane segment at 73–93 threads the bilayer; it reads LVFWSLTLIPLLKYIILVLGA. The Cytoplasmic segment spans residues 94–156; that stretch reads DDNGEGGTFA…AFFEKHYSLR (63 aa). The helical transmembrane segment at 157–177 threads the bilayer; that stretch reads VVLLLFVLMGTSMVIGDGVLT. Over 178–199 the chain is Extracellular; the sequence is PTMSVLAAVSGLRIKFPELHEN. Residue asparagine 199 is glycosylated (N-linked (GlcNAc...) asparagine). A helical membrane pass occupies residues 200 to 220; that stretch reads YTVLLACVILIGLFALQHYGT. Residues 221–222 lie on the Cytoplasmic side of the membrane; sequence RR. The helical transmembrane segment at 223–243 threads the bilayer; it reads VGFLFAPILISWLTCIGGIGI. The Extracellular segment spans residues 244–276; it reads YNIIKWNPSVIRALSPYYIYNFFRKAGKDGWSS. A helical membrane pass occupies residues 277–297; it reads LGGIVLCLTGAEAMFADLGHF. Over 298–303 the chain is Cytoplasmic; sequence SKLSLR. The chain crosses the membrane as a helical span at residues 304–324; it reads LGFTIVVYPCLVLAYMGEAAY. The Extracellular portion of the chain corresponds to 325-343; sequence LSKHREDLQSSFYKALPDR. A helical membrane pass occupies residues 344–364; that stretch reads VFWPVLFIATLATAVGSQAII. The Cytoplasmic segment spans residues 365–395; sequence SATFSIISQCRALGCFPRIKVVHTSSHVHGQ. The helical transmembrane segment at 396–416 threads the bilayer; the sequence is IYIPEVNWVLMSLCLAVTIGF. Over 417 to 424 the chain is Extracellular; that stretch reads RDTEMIGN. The chain crosses the membrane as a helical span at residues 425-445; that stretch reads AYGLAVILVMCATTCLMFLVI. At 446–451 the chain is on the cytoplasmic side; it reads TTVWNR. Residues 452 to 472 traverse the membrane as a helical segment; sequence WVVWAAAFTVVFGSVELLYLS. The Extracellular portion of the chain corresponds to 473–477; that stretch reads ACLAK. The chain crosses the membrane as a helical span at residues 478-498; the sequence is VPHGGWLPLLLSLTTLLVMST. The Cytoplasmic segment spans residues 499–778; it reads WHYGTAMKQQ…LIEVGMAYRV (280 aa). The segment covering 655–677 has biased composition (polar residues); that stretch reads PATSSSGGSNQHAFDAGTTTSSC. The interval 655–704 is disordered; sequence PATSSSGGSNQHAFDAGTTTSSCEIDATAGGGGRRKVRFDNDGGGGGEEE.

This sequence belongs to the HAK/KUP transporter (TC 2.A.72.3) family.

Its subcellular location is the membrane. In terms of biological role, high-affinity potassium transporter. The protein is Probable potassium transporter 13 (HAK13) of Oryza sativa subsp. japonica (Rice).